We begin with the raw amino-acid sequence, 122 residues long: Large ribosomal subunit protein uL14 (122 aa).

Belongs to the universal ribosomal protein uL14 family. Part of the 50S ribosomal subunit. Forms a cluster with proteins L3 and L19. In the 70S ribosome, L14 and L19 interact and together make contacts with the 16S rRNA in bridges B5 and B8.

Its function is as follows. Binds to 23S rRNA. Forms part of two intersubunit bridges in the 70S ribosome. This chain is Large ribosomal subunit protein uL14, found in Thermosipho melanesiensis (strain DSM 12029 / CIP 104789 / BI429).